The chain runs to 489 residues: Coronin-1B (489 aa).

Phosphoserine; by PKC is present on serine 2. WD repeat units lie at residues 18–72, 73–122, 123–166, 167–210, 211–256, and 257–296; these read QPVK…GRID, KAYP…SPLT, EPVV…GTAE, ELYR…RGTL, VAER…ENLE, and EPMA…RYFE. The tract at residues 408–444 is disordered; sequence RRNVLSDSRPAMAPGSSHLGAPASTTTAADATPSGSL. Residues 428–441 show a composition bias toward low complexity; that stretch reads APASTTTAADATPS. The stretch at 449-474 forms a coiled coil; it reads EAGKLEEVMQELRALRALVKEQGDRI.

It belongs to the WD repeat coronin family. Forms homooligomers, but does not form complexes with the other coronins. Interacts with Arp2/3 complex components, including ACTR2, ARPC1B and ARPC2. Binds actin. Post-translationally, phosphorylation by PKC on Ser-2 regulates the interaction with the Arp2/3 complex and cell motility in fibroblasts. Phosphorylation does not seem to affect subcellular location.

The protein localises to the cytoplasm. The protein resides in the cytoskeleton. It is found in the stress fiber. Functionally, regulates leading edge dynamics and cell motility in fibroblasts. May be involved in cytokinesis and signal transduction. This is Coronin-1B (CORO1B) from Homo sapiens (Human).